The chain runs to 1303 residues: DNA-directed RNA polymerase subunit beta'' (1303 aa).

Zn(2+) is bound by residues C225, C299, C306, and C309.

Belongs to the RNA polymerase beta' chain family. RpoC2 subfamily. In plastids the minimal PEP RNA polymerase catalytic core is composed of four subunits: alpha, beta, beta', and beta''. When a (nuclear-encoded) sigma factor is associated with the core the holoenzyme is formed, which can initiate transcription. The cofactor is Zn(2+).

It is found in the plastid. Its subcellular location is the chloroplast. The enzyme catalyses RNA(n) + a ribonucleoside 5'-triphosphate = RNA(n+1) + diphosphate. In terms of biological role, DNA-dependent RNA polymerase catalyzes the transcription of DNA into RNA using the four ribonucleoside triphosphates as substrates. This is DNA-directed RNA polymerase subunit beta'' from Rhodomonas salina (Cryptomonas salina).